The following is a 168-amino-acid chain: tRNA-splicing endonuclease (168 aa).

Active-site residues include Y107, H114, and K145.

Belongs to the tRNA-intron endonuclease family. Archaeal short subfamily. In terms of assembly, homotetramer; although the tetramer contains four active sites, only two participate in the cleavage. Therefore, it should be considered as a dimer of dimers.

The enzyme catalyses pretRNA = a 3'-half-tRNA molecule with a 5'-OH end + a 5'-half-tRNA molecule with a 2',3'-cyclic phosphate end + an intron with a 2',3'-cyclic phosphate and a 5'-hydroxyl terminus.. Its function is as follows. Endonuclease that removes tRNA introns. Cleaves pre-tRNA at the 5'- and 3'-splice sites to release the intron. The products are an intron and two tRNA half-molecules bearing 2',3' cyclic phosphate and 5'-OH termini. Recognizes a pseudosymmetric substrate in which 2 bulged loops of 3 bases are separated by a stem of 4 bp. The polypeptide is tRNA-splicing endonuclease (Thermococcus kodakarensis (strain ATCC BAA-918 / JCM 12380 / KOD1) (Pyrococcus kodakaraensis (strain KOD1))).